We begin with the raw amino-acid sequence, 168 residues long: 3-isopropylmalate dehydratase small subunit (168 aa).

The protein belongs to the LeuD family. LeuD type 2 subfamily. In terms of assembly, heterodimer of LeuC and LeuD.

It catalyses the reaction (2R,3S)-3-isopropylmalate = (2S)-2-isopropylmalate. It functions in the pathway amino-acid biosynthesis; L-leucine biosynthesis; L-leucine from 3-methyl-2-oxobutanoate: step 2/4. Its function is as follows. Catalyzes the isomerization between 2-isopropylmalate and 3-isopropylmalate, via the formation of 2-isopropylmaleate. This chain is 3-isopropylmalate dehydratase small subunit (leuD), found in Sulfurisphaera tokodaii (strain DSM 16993 / JCM 10545 / NBRC 100140 / 7) (Sulfolobus tokodaii).